The chain runs to 205 residues: Small ribosomal subunit protein uS4 (205 aa).

Positions glutamate 17 to serine 46 are disordered. The S4 RNA-binding domain maps to serine 94–valine 157.

This sequence belongs to the universal ribosomal protein uS4 family. In terms of assembly, part of the 30S ribosomal subunit. Contacts protein S5. The interaction surface between S4 and S5 is involved in control of translational fidelity.

Its function is as follows. One of the primary rRNA binding proteins, it binds directly to 16S rRNA where it nucleates assembly of the body of the 30S subunit. Functionally, with S5 and S12 plays an important role in translational accuracy. The protein is Small ribosomal subunit protein uS4 of Mesorhizobium japonicum (strain LMG 29417 / CECT 9101 / MAFF 303099) (Mesorhizobium loti (strain MAFF 303099)).